The following is a 48-amino-acid chain: Small, acid-soluble spore protein P (48 aa).

Over residues 1–12 (MTNKNDGKDMRK) the composition is skewed to basic and acidic residues. The disordered stretch occupies residues 1 to 48 (MTNKNDGKDMRKNAPKGDNPGQPEPLDGSKKVKNRNHTRQKHNTSHDM). The span at 31-48 (KVKNRNHTRQKHNTSHDM) shows a compositional bias: basic residues.

Belongs to the SspP family.

The protein resides in the spore core. The polypeptide is Small, acid-soluble spore protein P (Geobacillus kaustophilus (strain HTA426)).